The primary structure comprises 344 residues: Oxygen sensor histidine kinase NreB (344 aa).

Positions 58, 61, 73, and 76 each coordinate [4Fe-4S] cluster. The region spanning 152 to 344 is the Histidine kinase domain; sequence RISRELHDSV…GTNVTLNIPI (193 aa). At His158 the chain carries Phosphohistidine; by autocatalysis.

Requires [4Fe-4S] cluster as cofactor. Post-translationally, autophosphorylated.

It is found in the cytoplasm. It carries out the reaction ATP + protein L-histidine = ADP + protein N-phospho-L-histidine.. Member of the two-component regulatory system NreB/NreC involved in the control of dissimilatory nitrate/nitrite reduction in response to oxygen. NreB functions as a direct oxygen sensor histidine kinase which is autophosphorylated, in the absence of oxygen, probably at the conserved histidine residue, and transfers its phosphate group probably to a conserved aspartate residue of NreC. NreB/NreC activates the expression of the nitrate (narGHJI) and nitrite (nir) reductase operons, as well as the putative nitrate transporter gene narT. This chain is Oxygen sensor histidine kinase NreB (nreB), found in Staphylococcus aureus (strain JH1).